Here is a 156-residue protein sequence, read N- to C-terminus: Small ribosomal subunit protein uS7 (156 aa).

Belongs to the universal ribosomal protein uS7 family. As to quaternary structure, part of the 30S ribosomal subunit. Contacts proteins S9 and S11.

Functionally, one of the primary rRNA binding proteins, it binds directly to 16S rRNA where it nucleates assembly of the head domain of the 30S subunit. Is located at the subunit interface close to the decoding center, probably blocks exit of the E-site tRNA. The polypeptide is Small ribosomal subunit protein uS7 (Streptococcus pneumoniae (strain Taiwan19F-14)).